Reading from the N-terminus, the 364-residue chain is Formate dehydrogenase (364 aa).

Positions 93 and 119 each coordinate substrate. Residues 174–175 (RI), D195, 230–234 (PLHAG), T256, D282, and 311–314 (HYSG) each bind NAD(+).

The protein belongs to the D-isomer specific 2-hydroxyacid dehydrogenase family. FDH subfamily. Homodimer.

It localises to the cytoplasm. The catalysed reaction is formate + NAD(+) = CO2 + NADH. Its activity is regulated as follows. Cu(2+), Hg and p-chloromercuribenzoate are strong inhibitors of enzyme activity and Ca(2+), Mg(2+), Zn(2+), Mn(2+), Cd(2+) and Sn(2+) have no effect on activity indicating a cysteine residue in the protein is essential for enzyme activity or to maintain the proper structure of the enzyme. Nitrite and nitrate inhibit some enzyme activity, however cyanide, azide, thiocyanate and cyanate are strong inhibitors of the enzymatic reaction. The inhibition of cyanide is competitive with formate and reversible. In terms of biological role, catalyzes the NAD(+)-dependent oxidation of formate to carbon dioxide. Formate oxidation is the final step in the methanol oxidation pathway in methylotrophic microorganisms. Has a role in the detoxification of exogenous formate in non-methylotrophic organisms. In Candida boidinii (Yeast), this protein is Formate dehydrogenase.